The sequence spans 753 residues: 5-methyltetrahydropteroyltriglutamate--homocysteine methyltransferase (753 aa).

5-methyltetrahydropteroyltri-L-glutamate-binding positions include 17-20 (RELK) and Lys-117. L-homocysteine is bound by residues 431 to 433 (IGS) and Glu-484. L-methionine-binding positions include 431 to 433 (IGS) and Glu-484. 5-methyltetrahydropteroyltri-L-glutamate-binding positions include 515 to 516 (RC) and Trp-561. Asp-599 is an L-homocysteine binding site. Residue Asp-599 participates in L-methionine binding. A 5-methyltetrahydropteroyltri-L-glutamate-binding site is contributed by Glu-605. 3 residues coordinate Zn(2+): His-641, Cys-643, and Glu-665. The Proton donor role is filled by His-694. Cys-726 serves as a coordination point for Zn(2+).

This sequence belongs to the vitamin-B12 independent methionine synthase family. It depends on Zn(2+) as a cofactor.

The catalysed reaction is 5-methyltetrahydropteroyltri-L-glutamate + L-homocysteine = tetrahydropteroyltri-L-glutamate + L-methionine. Its pathway is amino-acid biosynthesis; L-methionine biosynthesis via de novo pathway; L-methionine from L-homocysteine (MetE route): step 1/1. Functionally, catalyzes the transfer of a methyl group from 5-methyltetrahydrofolate to homocysteine resulting in methionine formation. The chain is 5-methyltetrahydropteroyltriglutamate--homocysteine methyltransferase from Escherichia coli (strain SMS-3-5 / SECEC).